A 129-amino-acid polypeptide reads, in one-letter code: Small ribosomal subunit protein uS11 (129 aa).

Belongs to the universal ribosomal protein uS11 family. Part of the 30S ribosomal subunit. Interacts with proteins S7 and S18. Binds to IF-3.

Located on the platform of the 30S subunit, it bridges several disparate RNA helices of the 16S rRNA. Forms part of the Shine-Dalgarno cleft in the 70S ribosome. The chain is Small ribosomal subunit protein uS11 from Chelativorans sp. (strain BNC1).